The primary structure comprises 582 residues: MEALSRAGQEMSLAALKQHDPYITSIADLTGQVALYTFCPKANQWEKTDIEGTLFVYRRSASPYHGFTIVNRLNMHNLVEPVNKDLEFQLHEPFLLYRNASLSIYSIWFYDKNDCHRIAKLMADVVEEETRRSQQAARDKQSPSQANGCSDHRPIDILEMLSRAKDEYERNQMGDSNISSPGLQPSTQLSNLGSTETLEEMPSGSQDKSAPSGHKHLTVEELFGTSLPKEQPAVVGLDSEEMERLPGDASQKEPNSFLPFPFEQLGGAPQSETLGVPSAAHHSVQPEITTPVLITPASITQSNEKHAPTYTIPLSPVLSPTLPAEAPTAQVPPSLPRNSTMMQAVKTTPRQRSPLLNQPVPELSHASLIANQSPFRAPLNVTNTAGTSLPSVDLLQKLRLTPQHDQIQTQPLGKGAMVASFSPAAGQLATPESFIEPPSKTAAARVAASASLSNMVLAPLQSMQQNQDPEVFVQPKVLSSAIPVAGAPLVTATTTAVSSVLLAPSVFQQTVTRSSDLERKASSPSPLTIGTPESQRKPSIILSKSQLQDTLIHLIKNDSSFLSTLHEVYLQVLTKNKDNHNL.

Ser62 carries the phosphoserine modification. Residues Arg132–Gln141 show a composition bias toward basic and acidic residues. Disordered stretches follow at residues Arg132–Pro154 and Gln172–His214. 6 positions are modified to phosphoserine: Ser142, Ser179, Ser180, Ser315, Ser319, and Ser334. The segment covering Met173–Glu196 has biased composition (polar residues). A Phosphothreonine modification is found at Thr348. A Phosphoserine modification is found at Ser353. Arg376 carries the asymmetric dimethylarginine modification. Position 401 is a phosphothreonine (Thr401). Ser422, Ser522, Ser523, and Ser525 each carry phosphoserine. A disordered region spans residues Arg513–Arg536. The segment covering Ser522–Glu533 has biased composition (polar residues). Phosphothreonine occurs at positions 528 and 531.

The protein belongs to the DCP1 family. As to quaternary structure, (Microbial infection) Interacts with rotavirus A non-structural protein 2; this interaction probably plays a role in the sequestration of DCP1A in viral factories. Interacts with rotavirus A non-structural protein 5; this interaction probably plays a role in its sequestration in viral factories. In terms of assembly, forms a complex with EDC3, DCP2, DDX6 and EDC4/HEDLS, within this complex directly interacts with EDC3. Part of a cytoplasmic complex containing proteins involved in mRNA decay, including XRN1 and LSM1. Interacts with DCP1B. Interacts with DCP2. Interacts with DDX17 in an RNA-independent manner. Interacts with PNRC2. Interacts with SMAD4. Interacts with UPF1. Interacts with ZC3HAV1. Interacts with ZFP36L1. Interacts with NBDY. Interacts with DHX34; the interaction is RNA-independent. Detected in heart, brain, placenta, lung, skeletal muscle, liver, kidney and pancreas.

It is found in the cytoplasm. The protein localises to the P-body. Its subcellular location is the nucleus. It catalyses the reaction a 5'-end (N(7)-methyl 5'-triphosphoguanosine)-ribonucleoside in mRNA + H2O = N(7)-methyl-GDP + a 5'-end phospho-ribonucleoside in mRNA + 2 H(+). Necessary for the degradation of mRNAs, both in normal mRNA turnover and in nonsense-mediated mRNA decay. Removes the 7-methyl guanine cap structure from mRNA molecules, yielding a 5'-phosphorylated mRNA fragment and 7m-GDP. Contributes to the transactivation of target genes after stimulation by TGFB1. Essential for embryonic development. This Homo sapiens (Human) protein is mRNA-decapping enzyme 1A (DCP1A).